Here is a 278-residue protein sequence, read N- to C-terminus: Coiled-coil domain-containing protein 106 (278 aa).

The stretch at A61–R99 forms a coiled coil. Positions A102–G119 are enriched in basic and acidic residues. Positions A102–V174 are disordered. Phosphoserine is present on S128. A compositionally biased stretch (low complexity) spans E131–G144. Residues K150–P166 show a composition bias toward basic residues. The Bipartite nuclear localization signal signature appears at R151–G164.

As to quaternary structure, interacts with p53/TP53.

Its subcellular location is the nucleus. Its function is as follows. Promotes the degradation of p53/TP53 protein and inhibits its transactivity. This is Coiled-coil domain-containing protein 106 (CCDC106) from Bos taurus (Bovine).